A 97-amino-acid polypeptide reads, in one-letter code: F-actin-capping protein subunit beta (97 aa).

2 disordered regions span residues 1-27 (RLPP…AMPS) and 43-66 (KSGS…ETVS). Positions 43–57 (KSGSGTMNLGGSLTR) are enriched in polar residues. K97 carries the N6-acetyllysine modification.

It belongs to the F-actin-capping protein beta subunit family. In terms of assembly, component of the F-actin capping complex, composed of a heterodimer of an alpha and a beta subunit. Subunit of dynactin, a multiprotein complex part of a tripartite complex with dynein and a adapter, such as BICDL1, BICD2 or HOOK3. The dynactin complex is built around ACTR1A/ACTB filament and consists of an actin-related filament composed of a shoulder domain, a pointed end and a barbed end. Its length is defined by its flexible shoulder domain. The soulder is composed of 2 DCTN1 subunits, 4 DCTN2 and 2 DCTN3. The 4 DCNT2 (via N-terminus) bind the ACTR1A filament and act as molecular rulers to determine the length. The pointed end is important for binding dynein-dynactin cargo adapters. Consists of 4 subunits: ACTR10, DCNT4, DCTN5 and DCTN6. The barbed end is composed of a CAPZA1:CAPZB heterodimers, which binds ACTR1A/ACTB filament and dynactin and stabilizes dynactin. Interacts with ARHGAP17. Interaction with RCSD1/CAPZIP. Component of the WASH complex, composed of F-actin-capping protein subunit alpha (CAPZA1, CAPZA2 or CAPZA3), F-actin-capping protein subunit beta (CAPZB), WASH (WASHC1, WASH2P, WASH3P, WASH4P, WASH5P or WASH6P), WASHC2 (WASHC2A or WASHC2C), WASHC3, WASHC4 and WASHC5. Interacts with ACTG1. Directly interacts with CRACD; this interaction decreases binding to actin.

The protein localises to the cytoplasm. It is found in the cytoskeleton. The protein resides in the myofibril. Its subcellular location is the sarcomere. Functionally, F-actin-capping proteins bind in a Ca(2+)-independent manner to the fast growing ends of actin filaments (barbed end) thereby blocking the exchange of subunits at these ends. Unlike other capping proteins (such as gelsolin and severin), these proteins do not sever actin filaments. Plays a role in the regulation of cell morphology and cytoskeletal organization. Forms, with CAPZB, the barbed end of the fast growing ends of actin filaments in the dynactin complex and stabilizes dynactin structure. The dynactin multiprotein complex activates the molecular motor dynein for ultra-processive transport along microtubules. In Mesocricetus auratus (Golden hamster), this protein is F-actin-capping protein subunit beta.